We begin with the raw amino-acid sequence, 259 residues long: UPF0246 protein PST_1170 (259 aa).

It belongs to the UPF0246 family.

In Stutzerimonas stutzeri (strain A1501) (Pseudomonas stutzeri), this protein is UPF0246 protein PST_1170.